A 350-amino-acid polypeptide reads, in one-letter code: Probable arabinogalactan endo-beta-1,4-galactanase A (350 aa).

An N-terminal signal peptide occupies residues 1–16 (MIYPLLLSALPLLSSA). The N-linked (GlcNAc...) asparagine glycan is linked to asparagine 128. The Proton donor role is filled by glutamate 152. The Nucleophile role is filled by glutamate 262.

This sequence belongs to the glycosyl hydrolase 53 family.

It localises to the secreted. The enzyme catalyses The enzyme specifically hydrolyzes (1-&gt;4)-beta-D-galactosidic linkages in type I arabinogalactans.. Functionally, endogalactanase involved in the degradation of plant cell wall polysaccharides, and more particularly of hairy regions of pectin. The protein is Probable arabinogalactan endo-beta-1,4-galactanase A (galA) of Aspergillus tubingensis.